Reading from the N-terminus, the 122-residue chain is Nuclear transcription factor Y subunit beta (122 aa).

The tract at residues 1-12 (VQECVSEFISFI) is subunit association domain (SAD). Residues 1 to 57 (VQECVSEFISFITSEASERCHQEKRKTINGEDILFAMSTLGFDSYVEPLKLYLQKFR) are b domain. The c domain stretch occupies residues 58–122 (EAMKGEKGIG…ISGVQQIQFS (65 aa)).

The protein belongs to the NFYB/HAP3 subunit family. As to quaternary structure, heterotrimeric transcription factor composed of three components, NF-YA, NF-YB and NF-YC. NF-YB and NF-YC must interact and dimerize for NF-YA association and DNA binding.

It is found in the nucleus. Functionally, component of the sequence-specific heterotrimeric transcription factor (NF-Y) which specifically recognizes a 5'-CCAAT-3' box motif found in the promoters of its target genes. NF-Y can function as both an activator and a repressor, depending on its interacting cofactors. This Xenopus laevis (African clawed frog) protein is Nuclear transcription factor Y subunit beta (nfyb).